The chain runs to 564 residues: Proline--tRNA ligase (564 aa).

It belongs to the class-II aminoacyl-tRNA synthetase family. ProS type 1 subfamily. As to quaternary structure, homodimer.

The protein resides in the cytoplasm. It catalyses the reaction tRNA(Pro) + L-proline + ATP = L-prolyl-tRNA(Pro) + AMP + diphosphate. Its function is as follows. Catalyzes the attachment of proline to tRNA(Pro) in a two-step reaction: proline is first activated by ATP to form Pro-AMP and then transferred to the acceptor end of tRNA(Pro). As ProRS can inadvertently accommodate and process non-cognate amino acids such as alanine and cysteine, to avoid such errors it has two additional distinct editing activities against alanine. One activity is designated as 'pretransfer' editing and involves the tRNA(Pro)-independent hydrolysis of activated Ala-AMP. The other activity is designated 'posttransfer' editing and involves deacylation of mischarged Ala-tRNA(Pro). The misacylated Cys-tRNA(Pro) is not edited by ProRS. The polypeptide is Proline--tRNA ligase (Sulfurihydrogenibium sp. (strain YO3AOP1)).